The chain runs to 168 residues: WAP four-disulfide core domain protein 2 (168 aa).

Positions 1–30 (MPACRLCLLATGLLLGLLLFTPLSATGTRA) are cleaved as a signal peptide. WAP domains are found at residues 31–74 (EKPG…SKPN) and 119–167 (NGEK…TTPK). 4 disulfide bridges follow: cysteine 36/cysteine 62, cysteine 45/cysteine 66, cysteine 49/cysteine 61, and cysteine 55/cysteine 70. Residues 100 to 123 (PLSRGQVSTKPPVVTKEGGNGEKQ) form a disordered region. Disulfide bonds link cysteine 126–cysteine 154, cysteine 137–cysteine 158, cysteine 141–cysteine 153, and cysteine 147–cysteine 163.

In terms of assembly, homotrimer; disulfide-linked.

It is found in the secreted. In terms of biological role, broad range protease inhibitor. The protein is WAP four-disulfide core domain protein 2 (Wfdc2) of Rattus norvegicus (Rat).